The primary structure comprises 517 residues: Crotonobetaine/carnitine--CoA ligase (517 aa).

The protein belongs to the ATP-dependent AMP-binding enzyme family.

It catalyses the reaction 4-(trimethylamino)butanoate + ATP + CoA = 4-(trimethylamino)butanoyl-CoA + AMP + diphosphate. The enzyme catalyses crotonobetaine + ATP + CoA = crotonobetainyl-CoA + AMP + diphosphate. It carries out the reaction (R)-carnitine + ATP + CoA = (R)-carnitinyl-CoA + AMP + diphosphate. Its pathway is amine and polyamine metabolism; carnitine metabolism. In terms of biological role, catalyzes the transfer of CoA to carnitine, generating the initial carnitinyl-CoA needed for the CaiB reaction cycle. Also has activity toward crotonobetaine and gamma-butyrobetaine. The polypeptide is Crotonobetaine/carnitine--CoA ligase (Salmonella typhi).